The following is a 173-amino-acid chain: Phosphopantetheine adenylyltransferase (173 aa).

Ser9 is a substrate binding site. ATP-binding positions include 9 to 10 and His17; that span reads SF. Positions 41, 73, and 87 each coordinate substrate. Residues 88 to 90, Glu98, and 123 to 129 each bind ATP; these read GLR and YQHLSSS.

This sequence belongs to the bacterial CoaD family. Homohexamer. Requires Mg(2+) as cofactor.

The protein localises to the cytoplasm. It carries out the reaction (R)-4'-phosphopantetheine + ATP + H(+) = 3'-dephospho-CoA + diphosphate. The protein operates within cofactor biosynthesis; coenzyme A biosynthesis; CoA from (R)-pantothenate: step 4/5. Reversibly transfers an adenylyl group from ATP to 4'-phosphopantetheine, yielding dephospho-CoA (dPCoA) and pyrophosphate. The polypeptide is Phosphopantetheine adenylyltransferase (Limosilactobacillus reuteri (strain DSM 20016) (Lactobacillus reuteri)).